The primary structure comprises 277 residues: Large ribosomal subunit protein uL2 (277 aa).

Residues 199 to 277 (DHGNINDGKA…ILRSRHQRKS (79 aa)) are disordered.

It belongs to the universal ribosomal protein uL2 family. In terms of assembly, part of the 50S ribosomal subunit. Forms a bridge to the 30S subunit in the 70S ribosome.

Functionally, one of the primary rRNA binding proteins. Required for association of the 30S and 50S subunits to form the 70S ribosome, for tRNA binding and peptide bond formation. It has been suggested to have peptidyltransferase activity; this is somewhat controversial. Makes several contacts with the 16S rRNA in the 70S ribosome. The protein is Large ribosomal subunit protein uL2 of Mesorhizobium japonicum (strain LMG 29417 / CECT 9101 / MAFF 303099) (Mesorhizobium loti (strain MAFF 303099)).